Reading from the N-terminus, the 225-residue chain is Doublesex- and mab-3-related transcription factor C1 (225 aa).

The span at M1–K12 shows a compositional bias: basic and acidic residues. 2 disordered regions span residues M1–H49 and Q179–G216. Basic residues predominate over residues R27–K37.

It belongs to the DMRT family.

The polypeptide is Doublesex- and mab-3-related transcription factor C1 (Dmrtc1) (Rattus norvegicus (Rat)).